The following is a 345-amino-acid chain: Ninja-family protein AFP1 (345 aa).

Disordered regions lie at residues 114-185 and 201-256; these read TSLP…ATAN and QVSG…RRLS. Composition is skewed to basic and acidic residues over residues 123 to 132 and 222 to 232; these read EWRKRKEMQT and LETKASSDEAR. Over residues 235-249 the composition is skewed to low complexity; it reads PSTTQPQQETTTKPT.

Belongs to the Ninja family. As to quaternary structure, forms a heterodimer with AFP2. Interacts with ABI5/DPBF1, DPBF2, AREB3/DPBF3, ABF1, ABF3/DPBF5 and ABF4/AREB2.

The protein resides in the nucleus. Acts as a negative regulator of abscisic acid (ABA) response during germination through the ubiquitin-mediated proteolysis of ABI5/DPBF1. The chain is Ninja-family protein AFP1 (AFP1) from Arabidopsis thaliana (Mouse-ear cress).